Here is a 462-residue protein sequence, read N- to C-terminus: MSLARPNARLLSRTNRVFSSQIRTYSAPGDGVIPPAKKKYVPTSGTYPRGFKVGSAHVGVKASNTRFDDLALITSDTPCAAAAVFTKNKFQAAPVTVSRDLLKERGGQGIRAVIVNSGCANAVTGKGGIEDAKSMAKHTDACFTDSPDSPDSPYRSIVMSTGVIGQRLPIDKITSKIPTAFANLGDTHDHWLGTARAICTTDTFPKLMSKTFKLPSSDREYRIAGMTKGAGMIHPNMATLLGIICTDVPVAYFPLRRILASAANKSFNSISIDGDTSTNDTVAILANGAAGGDLIDTKFHSDFESLKQVITDFSIDLAKLVVRDGEGATKFVTIRVTNARSITDARRIASSIARSPLVKTALYGKDANWGRILCATGYSTARNPAVPEETSVSFVPTDGSEELKLLVNGEPEQVDEARAAKILEAEDLEIKVSVSNTPGKDTWFWTCDFSHEYVTINGDYRT.

The substrate site is built by Thr200, Lys228, Thr239, Glu326, Asn457, and Thr462. Residue Thr239 is the Nucleophile of the active site.

The protein belongs to the ArgJ family. In terms of assembly, heterodimer of an alpha and a beta chain. Post-translationally, the alpha and beta chains are autoproteolytically processed from a single precursor protein within the mitochondrion.

It is found in the mitochondrion matrix. It carries out the reaction N(2)-acetyl-L-ornithine + L-glutamate = N-acetyl-L-glutamate + L-ornithine. It catalyses the reaction L-glutamate + acetyl-CoA = N-acetyl-L-glutamate + CoA + H(+). It functions in the pathway amino-acid biosynthesis; L-arginine biosynthesis; L-ornithine and N-acetyl-L-glutamate from L-glutamate and N(2)-acetyl-L-ornithine (cyclic): step 1/1. Its pathway is amino-acid biosynthesis; L-arginine biosynthesis; N(2)-acetyl-L-ornithine from L-glutamate: step 1/4. Its function is as follows. Catalyzes two activities which are involved in the cyclic version of arginine biosynthesis: the synthesis of acetylglutamate from glutamate and acetyl-CoA, and of ornithine by transacetylation between acetylornithine and glutamate. This chain is Arginine biosynthesis bifunctional protein ArgJ, mitochondrial, found in Pyrenophora tritici-repentis (strain Pt-1C-BFP) (Wheat tan spot fungus).